The primary structure comprises 153 residues: Ribonuclease H (153 aa).

Positions 4–145 constitute an RNase H type-1 domain; the sequence is SVDSVELFTD…ADQLANRGVD (142 aa). Mg(2+) contacts are provided by Asp13, Glu51, Asp73, and Asp137.

The protein belongs to the RNase H family. Monomer. Mg(2+) is required as a cofactor.

It localises to the cytoplasm. The catalysed reaction is Endonucleolytic cleavage to 5'-phosphomonoester.. Its function is as follows. Endonuclease that specifically degrades the RNA of RNA-DNA hybrids. This chain is Ribonuclease H, found in Pseudomonas fluorescens (strain Pf0-1).